The sequence spans 649 residues: tRNA-guanine(15) transglycosylase (649 aa).

Asp-88 acts as the Nucleophile in catalysis. Residues Asp-123 and Ala-194 each coordinate substrate. The Zn(2+) site is built by Cys-280, Cys-282, and Cys-285. The PUA domain occupies 573 to 648; that stretch reads KYRIVIDSSV…VAATLRGGLK (76 aa).

This sequence belongs to the archaeosine tRNA-ribosyltransferase family. Zn(2+) is required as a cofactor.

The enzyme catalyses guanosine(15) in tRNA + 7-cyano-7-deazaguanine = 7-cyano-7-carbaguanosine(15) in tRNA + guanine. It functions in the pathway tRNA modification; archaeosine-tRNA biosynthesis. Its function is as follows. Exchanges the guanine residue with 7-cyano-7-deazaguanine (preQ0) at position 15 in the dihydrouridine loop (D-loop) of archaeal tRNAs. In Methanococcus maripaludis (strain C6 / ATCC BAA-1332), this protein is tRNA-guanine(15) transglycosylase.